Here is a 547-residue protein sequence, read N- to C-terminus: Chaperonin GroEL 1 (547 aa).

Residues 30 to 33 (TLGP), Lys-51, 87 to 91 (DGTTT), Gly-415, 479 to 481 (NAA), and Asp-495 each bind ATP. The disordered stretch occupies residues 525–547 (PKKKGAPAGGGMGGMGGMDEMDY). Gly residues predominate over residues 531–541 (PAGGGMGGMGG).

Belongs to the chaperonin (HSP60) family. In terms of assembly, forms a cylinder of 14 subunits composed of two heptameric rings stacked back-to-back. Interacts with the co-chaperonin GroES.

It is found in the cytoplasm. It carries out the reaction ATP + H2O + a folded polypeptide = ADP + phosphate + an unfolded polypeptide.. Functionally, together with its co-chaperonin GroES, plays an essential role in assisting protein folding. The GroEL-GroES system forms a nano-cage that allows encapsulation of the non-native substrate proteins and provides a physical environment optimized to promote and accelerate protein folding. This Anaeromyxobacter sp. (strain Fw109-5) protein is Chaperonin GroEL 1.